The following is a 355-amino-acid chain: Replication-associated protein (355 aa).

In terms of domain architecture, CRESS-DNA virus Rep endonuclease spans 11–114; the sequence is SHRNANTFLT…PLAVFERGTF (104 aa). The RCR-1 signature appears at 18–21; the sequence is FLTY. 3 residues coordinate a divalent metal cation: Glu-52, His-60, and His-62. Positions 60–62 match the RCR-2 motif; sequence HLH. Tyr-100 acts as the For DNA cleavage activity in catalysis. An RCR-3 motif is present at residues 100–103; it reads YILK. Glu-104 is a binding site for a divalent metal cation. Positions 175-187 are oligomerization; sequence SANKLFPEIQEEF. Residue 229–236 coordinates ATP; the sequence is GPTRTGKS. The interval 252–270 is transactivation; it reads VDWSSYNEDAIYNIVDDIP. Residues 292 to 303 carry the Nuclear localization signal motif; sequence KYGKKKKVQKKS.

This sequence belongs to the geminiviridae Rep protein family. Homooligomer. Rep binds to repeated DNA motifs (iterons). Forms the O-complex, which is a Rep-DNA complex involved in the initiation of RCR. Part of the C- and V-complexes which are RepA-Rep-DNA complexes involved in the c-sense and v-sense transcription. Mg(2+) is required as a cofactor. The cofactor is Mn(2+).

The protein resides in the host nucleus. Functionally, essential for the replication of viral ssDNA. The closed circular ssDNA genome is first converted to a superhelical dsDNA. Rep binds a specific region at the genome origin of replication. It introduces an endonucleolytic nick within the conserved sequence 5'-TAATATTAC-3' in the intergenic region of the genome present in all geminiviruses, thereby initiating the rolling circle replication (RCR). Following cleavage, binds covalently to the 5'-phosphate of DNA as a tyrosyl ester. The cleavage gives rise to a free 3'-OH that serves as a primer for the cellular DNA polymerase. The polymerase synthesizes the (+) strand DNA by rolling circle mechanism. After one round of replication, a Rep-catalyzed nucleotidyl transfer reaction releases a circular single-stranded virus genome, thereby terminating the replication. Displays origin-specific DNA cleavage, nucleotidyl transferase, ATPase and helicase activities. Acts as an inhibitor of C-sense gene transcription. The protein is Replication-associated protein of Maize streak virus genotype A (isolate South Africa) (MSV).